We begin with the raw amino-acid sequence, 188 residues long: UPF0232 protein RHA1_ro03670 (188 aa).

3 disordered regions span residues 1-20, 31-78, and 166-188; these read MTDDLEPTAPAAAAPEPEVK, EARA…QPFG, and PTAPSWRKGERHIRGRGPRDTYG. Residues 7–16 show a composition bias toward low complexity; it reads PTAPAAAAPE.

Belongs to the UPF0232 family.

This chain is UPF0232 protein RHA1_ro03670, found in Rhodococcus jostii (strain RHA1).